Here is a 527-residue protein sequence, read N- to C-terminus: Glucose-6-phosphate isomerase (527 aa).

E323 functions as the Proton donor in the catalytic mechanism. Residues H352 and K454 contribute to the active site.

Belongs to the GPI family.

The protein resides in the cytoplasm. The catalysed reaction is alpha-D-glucose 6-phosphate = beta-D-fructose 6-phosphate. It participates in carbohydrate biosynthesis; gluconeogenesis. It functions in the pathway carbohydrate degradation; glycolysis; D-glyceraldehyde 3-phosphate and glycerone phosphate from D-glucose: step 2/4. In terms of biological role, catalyzes the reversible isomerization of glucose-6-phosphate to fructose-6-phosphate. This chain is Glucose-6-phosphate isomerase, found in Prochlorococcus marinus (strain MIT 9312).